A 154-amino-acid chain; its full sequence is Ribosomal RNA large subunit methyltransferase H (154 aa).

Glycine 103 contacts S-adenosyl-L-methionine.

This sequence belongs to the RNA methyltransferase RlmH family. In terms of assembly, homodimer.

The protein localises to the cytoplasm. It carries out the reaction pseudouridine(1915) in 23S rRNA + S-adenosyl-L-methionine = N(3)-methylpseudouridine(1915) in 23S rRNA + S-adenosyl-L-homocysteine + H(+). Its function is as follows. Specifically methylates the pseudouridine at position 1915 (m3Psi1915) in 23S rRNA. The chain is Ribosomal RNA large subunit methyltransferase H from Gemmatimonas aurantiaca (strain DSM 14586 / JCM 11422 / NBRC 100505 / T-27).